A 229-amino-acid polypeptide reads, in one-letter code: NAD(P)H-quinone oxidoreductase subunit K, chloroplastic (229 aa).

Cys43, Cys44, Cys108, and Cys139 together coordinate [4Fe-4S] cluster.

The protein belongs to the complex I 20 kDa subunit family. NDH is composed of at least 16 different subunits, 5 of which are encoded in the nucleus. It depends on [4Fe-4S] cluster as a cofactor.

The protein localises to the plastid. Its subcellular location is the chloroplast thylakoid membrane. The catalysed reaction is a plastoquinone + NADH + (n+1) H(+)(in) = a plastoquinol + NAD(+) + n H(+)(out). It carries out the reaction a plastoquinone + NADPH + (n+1) H(+)(in) = a plastoquinol + NADP(+) + n H(+)(out). Its function is as follows. NDH shuttles electrons from NAD(P)H:plastoquinone, via FMN and iron-sulfur (Fe-S) centers, to quinones in the photosynthetic chain and possibly in a chloroplast respiratory chain. The immediate electron acceptor for the enzyme in this species is believed to be plastoquinone. Couples the redox reaction to proton translocation, and thus conserves the redox energy in a proton gradient. In Aethionema cordifolium (Lebanon stonecress), this protein is NAD(P)H-quinone oxidoreductase subunit K, chloroplastic.